Here is a 551-residue protein sequence, read N- to C-terminus: Alkaline nuclease (551 aa).

It belongs to the herpesviridae alkaline nuclease family. In terms of assembly, interacts with major DNA-binding protein; this interaction increases the nuclease processivity of the alkaline exonuclease.

It localises to the host nucleus. The protein resides in the host cytoplasm. Its function is as follows. Plays a role in processing non linear or branched viral DNA intermediates in order to promote the production of mature packaged unit-length linear progeny viral DNA molecules. Exhibits endonuclease and exonuclease activities and accepts both double-stranded and single-stranded DNA as substrate. Exonuclease digestion of DNA is in the 5'-&gt; 3' direction and the products are 5'-monophosphate nucleosides. Additionally, forms a recombinase with the major DNA-binding protein, which displays strand exchange activity. The polypeptide is Alkaline nuclease (Homo sapiens (Human)).